The primary structure comprises 1157 residues: Peroxisomal ATPase PEX1 (1157 aa).

Disordered regions lie at residues 187-221 (SISSVRSDSSGHRIRRVRSSTSTATGRRSVTNNGE) and 1135-1157 (SGRDGNMPDGTASNEIGARSTLM). A compositionally biased stretch (low complexity) spans 205 to 217 (SSTSTATGRRSVT).

It belongs to the AAA ATPase family. Interacts with PEX6; forming the PEX1-PEX6 AAA ATPase complex, which is composed of a heterohexamer formed by a trimer of PEX1-PEX6 dimers.

The protein resides in the membrane. It catalyses the reaction ATP + H2O = ADP + phosphate + H(+). Its function is as follows. Component of the PEX1-PEX6 AAA ATPase complex involved in peroxisome biosynthesis. The complex acts as a protein dislocase complex that mediates the ATP-dependent extraction of the PEX5 receptor from peroxisomal membranes, an essential step for PEX5 recycling. Specifically recognizes PEX5 monoubiquitinated at 'Cys-6', and pulls it out of the peroxisome lumen through the PEX2-PEX10-PEX12 retrotranslocation channel. Extraction by the PEX1-PEX6 AAA ATPase complex is accompanied by unfolding of the TPR repeats and release of bound cargo from PEX5. This is Peroxisomal ATPase PEX1 from Komagataella pastoris (Yeast).